We begin with the raw amino-acid sequence, 115 residues long: Large ribosomal subunit protein bL20 (115 aa).

Belongs to the bacterial ribosomal protein bL20 family.

In terms of biological role, binds directly to 23S ribosomal RNA and is necessary for the in vitro assembly process of the 50S ribosomal subunit. It is not involved in the protein synthesizing functions of that subunit. This is Large ribosomal subunit protein bL20 from Prochlorococcus marinus (strain MIT 9301).